The following is a 173-amino-acid chain: MKVILRSDVENLGRLGDIVTVKSGYGRNYLLPQGLAMLVTPGNMKVFELEFKKLQERMNDIRSKADELAKRISGLIVTVLMRAGDNDKLYGSVTTSIIGHALAEQGIDIDRRRILLDAPIRTLGQHTVRVRLHADVIAEFIVNVASEEKLYDDTPDRTETEESTKELQEEHAE.

The disordered stretch occupies residues 151–173 (YDDTPDRTETEESTKELQEEHAE).

Belongs to the bacterial ribosomal protein bL9 family.

Its function is as follows. Binds to the 23S rRNA. This chain is Large ribosomal subunit protein bL9, found in Lawsonia intracellularis (strain PHE/MN1-00).